Here is a 351-residue protein sequence, read N- to C-terminus: S-adenosylmethionine:tRNA ribosyltransferase-isomerase (351 aa).

The protein belongs to the QueA family. Monomer.

Its subcellular location is the cytoplasm. The catalysed reaction is 7-aminomethyl-7-carbaguanosine(34) in tRNA + S-adenosyl-L-methionine = epoxyqueuosine(34) in tRNA + adenine + L-methionine + 2 H(+). The protein operates within tRNA modification; tRNA-queuosine biosynthesis. Its function is as follows. Transfers and isomerizes the ribose moiety from AdoMet to the 7-aminomethyl group of 7-deazaguanine (preQ1-tRNA) to give epoxyqueuosine (oQ-tRNA). This is S-adenosylmethionine:tRNA ribosyltransferase-isomerase from Photobacterium profundum (strain SS9).